A 353-amino-acid polypeptide reads, in one-letter code: Photosystem II D2 protein (353 aa).

An N-acetylthreonine modification is found at Thr-2. Thr-2 bears the Phosphothreonine mark. A helical membrane pass occupies residues 41–61 (CAYFALGGWFTGTTFVTSWYT). Chlorophyll a is bound at residue His-118. Residues 125 to 141 (GFMLRQFELARSVQLRP) form a helical membrane-spanning segment. Residues Gln-130 and Asn-143 each coordinate pheophytin a. The helical transmembrane segment at 153-166 (VFVSVFLIYPLGQS) threads the bilayer. Residue His-198 participates in chlorophyll a binding. The helical transmembrane segment at 208-228 (AALLCAIHGATVENTLFEDGD) threads the bilayer. A plastoquinone-binding residues include His-215 and Phe-262. His-215 is a Fe cation binding site. His-269 serves as a coordination point for Fe cation. The helical transmembrane segment at 279–295 (GLWMSAIGVVGLALNLR) threads the bilayer.

This sequence belongs to the reaction center PufL/M/PsbA/D family. As to quaternary structure, PSII is composed of 1 copy each of membrane proteins PsbA, PsbB, PsbC, PsbD, PsbE, PsbF, PsbH, PsbI, PsbJ, PsbK, PsbL, PsbM, PsbT, PsbX, PsbY, PsbZ, Psb30/Ycf12, at least 3 peripheral proteins of the oxygen-evolving complex and a large number of cofactors. It forms dimeric complexes. The D1/D2 heterodimer binds P680, chlorophylls that are the primary electron donor of PSII, and subsequent electron acceptors. It shares a non-heme iron and each subunit binds pheophytin, quinone, additional chlorophylls, carotenoids and lipids. There is also a Cl(-1) ion associated with D1 and D2, which is required for oxygen evolution. The PSII complex binds additional chlorophylls, carotenoids and specific lipids. is required as a cofactor.

It is found in the plastid. It localises to the chloroplast thylakoid membrane. It catalyses the reaction 2 a plastoquinone + 4 hnu + 2 H2O = 2 a plastoquinol + O2. Functionally, photosystem II (PSII) is a light-driven water:plastoquinone oxidoreductase that uses light energy to abstract electrons from H(2)O, generating O(2) and a proton gradient subsequently used for ATP formation. It consists of a core antenna complex that captures photons, and an electron transfer chain that converts photonic excitation into a charge separation. The D1/D2 (PsbA/PsbD) reaction center heterodimer binds P680, the primary electron donor of PSII as well as several subsequent electron acceptors. D2 is needed for assembly of a stable PSII complex. This chain is Photosystem II D2 protein, found in Agrostis stolonifera (Creeping bentgrass).